The chain runs to 352 residues: Putative conjugal transfer protein MT3759 (352 aa).

An ATP-binding site is contributed by 160–167 (GGTGAGKT).

Belongs to the GSP E family.

The protein resides in the cytoplasm. This is Putative conjugal transfer protein MT3759 from Mycobacterium tuberculosis (strain CDC 1551 / Oshkosh).